The primary structure comprises 472 residues: MSLSLYNTLHRRSEPFEPLEANLVRMYCCGITVYDYCHLGHARTCLIWDVVRRYLQWSGYEVHYIQNFTDIDDKILNRARAEKSSMGAIAEKFIEAYFEDMEALHIQPADEYPRATHSLDGIQKLIHDLEQRGFAYASQGDVYYAVRKFDGYGKLSGRKLDDMQAGASGRVNEDPDAPKKHDPFDFALWKAAKAGEPAWDSPWGAGRPGWHIECSAMVRDRLGETIDIHVGGSDLIFPHHENEIAQSEAATGQPLAKYWLHNGMVKVEGEKMSKSLGNFITIRELLKKYDPMAVRLFILQAHYTKPLDFTDEALTAATKGWETLNDALLFGAEHLDTNNITADKGILAKFKAIVDNDLNFSGGLAILFELAKELKKEKNILVHEGKLQQNPQILASLWLTLKELADILGFVPETKQQAAGLTDAEIEDLIQQRKDARANKNYAEGDRLRDLLAEKGIVLVDKPGGITEWHRE.

C29 lines the Zn(2+) pocket. The 'HIGH' region motif lies at 31 to 41; it reads ITVYDYCHLGH. Positions 214, 239, and 243 each coordinate Zn(2+). The 'KMSKS' region motif lies at 271–275; that stretch reads KMSKS. An ATP-binding site is contributed by K274.

The protein belongs to the class-I aminoacyl-tRNA synthetase family. In terms of assembly, monomer. Zn(2+) is required as a cofactor.

The protein resides in the cytoplasm. It carries out the reaction tRNA(Cys) + L-cysteine + ATP = L-cysteinyl-tRNA(Cys) + AMP + diphosphate. The protein is Cysteine--tRNA ligase of Picosynechococcus sp. (strain ATCC 27264 / PCC 7002 / PR-6) (Agmenellum quadruplicatum).